Consider the following 261-residue polypeptide: Undecaprenyl-diphosphatase (261 aa).

8 helical membrane passes run Ala-9 to Thr-31, Phe-46 to Tyr-66, Ile-80 to Gly-100, Ile-102 to Phe-122, Ala-137 to Pro-157, Ala-180 to Trp-200, Gly-209 to Val-229, and Gly-240 to Leu-260.

This sequence belongs to the UppP family.

It localises to the cell inner membrane. The catalysed reaction is di-trans,octa-cis-undecaprenyl diphosphate + H2O = di-trans,octa-cis-undecaprenyl phosphate + phosphate + H(+). Functionally, catalyzes the dephosphorylation of undecaprenyl diphosphate (UPP). Confers resistance to bacitracin. The sequence is that of Undecaprenyl-diphosphatase from Thermus thermophilus (strain ATCC 27634 / DSM 579 / HB8).